The sequence spans 550 residues: Arginine--tRNA ligase (550 aa).

The 'HIGH' region motif lies at 130–140 (ANPTGPIHIGG).

This sequence belongs to the class-I aminoacyl-tRNA synthetase family. Monomer.

It is found in the cytoplasm. The catalysed reaction is tRNA(Arg) + L-arginine + ATP = L-arginyl-tRNA(Arg) + AMP + diphosphate. The chain is Arginine--tRNA ligase from Mycobacterium ulcerans (strain Agy99).